Reading from the N-terminus, the 185-residue chain is Elongation factor P (185 aa).

The protein belongs to the elongation factor P family.

The protein resides in the cytoplasm. Its pathway is protein biosynthesis; polypeptide chain elongation. Involved in peptide bond synthesis. Stimulates efficient translation and peptide-bond synthesis on native or reconstituted 70S ribosomes in vitro. Probably functions indirectly by altering the affinity of the ribosome for aminoacyl-tRNA, thus increasing their reactivity as acceptors for peptidyl transferase. This chain is Elongation factor P, found in Nitrosomonas europaea (strain ATCC 19718 / CIP 103999 / KCTC 2705 / NBRC 14298).